A 200-amino-acid chain; its full sequence is 3-isopropylmalate dehydratase small subunit (200 aa).

Belongs to the LeuD family. LeuD type 1 subfamily. In terms of assembly, heterodimer of LeuC and LeuD.

The enzyme catalyses (2R,3S)-3-isopropylmalate = (2S)-2-isopropylmalate. The protein operates within amino-acid biosynthesis; L-leucine biosynthesis; L-leucine from 3-methyl-2-oxobutanoate: step 2/4. Functionally, catalyzes the isomerization between 2-isopropylmalate and 3-isopropylmalate, via the formation of 2-isopropylmaleate. The sequence is that of 3-isopropylmalate dehydratase small subunit from Sodalis glossinidius (strain morsitans).